The chain runs to 396 residues: MQLLDNLDAALRKLDAQHLRRRRRTAESPCAPHVRVDGRDMLAFCSNDYLGLAAHPVIVAALAEGAARYGAGSGASHLISGHSHAHAQLEERLANMLAPHLEQPRALYFCTGYMANLAVLGALAGRDADIFSEALNHASLIDGARLSRARVQVYPHADLDALADMLAASRAQTRLIVSDGVFSMDGDIAPLRDLLALAERHGAWLVVDDAHGFGVLGEHGRGVLEHAGLRSPHLVLMGTLGKAAGVAGAFVAAHATVIDWLVNRARPYIFSTAAAPAQAHALMASLNLIEGSEGRQRRARLQALAQQLQARLSLRQWRHQPTPTAIQPIVLGANAHALRAAAGLESQGLWVPAIRPPTVPPGTARLRVTLSASHIPAHVDRLADALNQLDNEACHA.

Residue arginine 21 coordinates substrate. Position 112–113 (112–113 (GY)) interacts with pyridoxal 5'-phosphate. Histidine 137 contacts substrate. Pyridoxal 5'-phosphate contacts are provided by serine 183, histidine 211, and threonine 239. Residue lysine 242 is modified to N6-(pyridoxal phosphate)lysine. Residue threonine 358 coordinates substrate.

It belongs to the class-II pyridoxal-phosphate-dependent aminotransferase family. BioF subfamily. As to quaternary structure, homodimer. The cofactor is pyridoxal 5'-phosphate.

It catalyses the reaction 6-carboxyhexanoyl-[ACP] + L-alanine + H(+) = (8S)-8-amino-7-oxononanoate + holo-[ACP] + CO2. It participates in cofactor biosynthesis; biotin biosynthesis. In terms of biological role, catalyzes the decarboxylative condensation of pimeloyl-[acyl-carrier protein] and L-alanine to produce 8-amino-7-oxononanoate (AON), [acyl-carrier protein], and carbon dioxide. The sequence is that of 8-amino-7-oxononanoate synthase from Bordetella petrii (strain ATCC BAA-461 / DSM 12804 / CCUG 43448).